The chain runs to 391 residues: Processive diacylglycerol beta-glucosyltransferase (391 aa).

The protein belongs to the glycosyltransferase 28 family. UgtP subfamily.

Its subcellular location is the cell membrane. The catalysed reaction is a 1,2-diacyl-3-O-(beta-D-glucopyranosyl)-sn-glycerol + UDP-alpha-D-glucose = a 1,2-diacyl-3-O-(beta-D-Glc-(1-&gt;6)-beta-D-Glc)-sn-glycerol + UDP + H(+). The enzyme catalyses a 1,2-diacyl-sn-glycerol + UDP-alpha-D-glucose = a 1,2-diacyl-3-O-(beta-D-glucopyranosyl)-sn-glycerol + UDP + H(+). The protein operates within glycolipid metabolism; diglucosyl-diacylglycerol biosynthesis. Its function is as follows. Processive glucosyltransferase involved in the biosynthesis of both the bilayer- and non-bilayer-forming membrane glucolipids. Is able to successively transfer two glucosyl residues to diacylglycerol (DAG), thereby catalyzing the formation of beta-monoglucosyl-DAG (3-O-(beta-D-glucopyranosyl)-1,2-diacyl-sn-glycerol) and beta-diglucosyl-DAG (3-O-(beta-D-glucopyranosyl-beta-(1-&gt;6)-D-glucopyranosyl)-1,2-diacyl-sn-glycerol). Beta-diglucosyl-DAG is the predominant glycolipid found in Bacillales and is also used as a membrane anchor for lipoteichoic acid (LTA). In Staphylococcus aureus (strain Mu3 / ATCC 700698), this protein is Processive diacylglycerol beta-glucosyltransferase.